The primary structure comprises 185 residues: Lipid A acyltransferase PagP (185 aa).

Positions 1-14 (MKLKPVLYLLMLLG) are cleaved as a signal peptide. Cysteine 15 carries the N-palmitoyl cysteine lipid modification. Cysteine 15 carries the S-diacylglycerol cysteine lipid modification. Catalysis depends on residues histidine 57, aspartate 100, and serine 101.

This sequence belongs to the lipid A palmitoyltransferase family. Homodimer.

It localises to the cell outer membrane. The enzyme catalyses a lipid A + a 1,2-diacyl-sn-glycero-3-phosphocholine = a hepta-acyl lipid A + a 2-acyl-sn-glycero-3-phosphocholine. It carries out the reaction a lipid IVA + a 1,2-diacyl-sn-glycero-3-phosphocholine = a lipid IVB + a 2-acyl-sn-glycero-3-phosphocholine. The catalysed reaction is a lipid IIA + a 1,2-diacyl-sn-glycero-3-phosphocholine = a lipid IIB + a 2-acyl-sn-glycero-3-phosphocholine. Transfers a fatty acid residue from the sn-1 position of a phospholipid to the N-linked hydroxyfatty acid chain on the proximal unit of lipid A or its precursors. The protein is Lipid A acyltransferase PagP of Erwinia pyrifoliae (strain DSM 12163 / CIP 106111 / Ep16/96).